The chain runs to 478 residues: Alpha-1,3-mannosyl-glycoprotein 4-beta-N-acetylglucosaminyltransferase C (478 aa).

The Cytoplasmic segment spans residues 1-23 (MFKFHQVKHIFEILDKMRCLRKR). A helical; Signal-anchor for type II membrane protein membrane pass occupies residues 24–44 (FTVSFLGVLVIFLLFMNLYIE). The Lumenal segment spans residues 45–478 (DSYVLEGDKQ…IIRSISIWTS (434 aa)). N-linked (GlcNAc...) asparagine glycosylation is found at Asn84, Asn215, and Asn348.

This sequence belongs to the glycosyltransferase 54 family. A divalent metal cation serves as cofactor.

The protein localises to the golgi apparatus membrane. It carries out the reaction N(4)-{beta-D-GlcNAc-(1-&gt;2)-alpha-D-Man-(1-&gt;3)-[beta-D-GlcNAc-(1-&gt;2)-alpha-D-Man-(1-&gt;6)]-beta-D-Man-(1-&gt;4)-beta-D-GlcNAc-(1-&gt;4)-beta-D-GlcNAc}-L-asparaginyl-[protein] + UDP-N-acetyl-alpha-D-glucosamine = N(4)-{beta-D-GlcNAc-(1-&gt;2)-[beta-D-GlcNAc-(1-&gt;4)]-alpha-D-Man-(1-&gt;3)-[beta-D-GlcNAc-(1-&gt;2)-alpha-D-Man-(1-&gt;6)]-beta-D-Man-(1-&gt;4)-beta-D-GlcNAc-(1-&gt;4)-beta-D-GlcNAc}-L-asparaginyl-[protein] + UDP + H(+). The protein operates within protein modification; protein glycosylation. In terms of biological role, glycosyltransferase that participates in the transfer of N-acetylglucosamine (GlcNAc) to the core mannose residues of N-linked glycans. Catalyzes the formation of the GlcNAcbeta1-4 branch on the GlcNAcbeta1-2Manalpha1-3 arm of the core structure of N-linked glycans. Essential for the production of tri- and tetra-antennary N-linked sugar chains. Does not catalyze the transfer of GlcNAc to the Manalpha1-6 arm to form GlcNAcBeta1-4Manalpha1-6 linkage ('GnT-VI' activity). The sequence is that of Alpha-1,3-mannosyl-glycoprotein 4-beta-N-acetylglucosaminyltransferase C (MGAT4C) from Sus scrofa (Pig).